A 278-amino-acid chain; its full sequence is MANYTAADIKALRERTGAGMMDVKKALDEADGNAEKALELIRIKGLKGATKREGRSTAEGLVAATVENGVGVMVEVNCETDFVAKSGPFIEFANKALAAAVASGAADVDALLAAEVDGKPLSELVIEAGALLGEKVAIRRLARVTGAVVDAYLHKTSKDLPAQVGVLFAVDGEGEAATTAAHDVAVHIAAYTPNYLLREDVPADLVDSERRIADETARAEGKPEAALPKIVEGRLTGFFKENVLLDQPFAKDQKQSVAQVLDAASAKAVGFARFRVGA.

The tract at residues T80–V83 is involved in Mg(2+) ion dislocation from EF-Tu.

The protein belongs to the EF-Ts family.

The protein resides in the cytoplasm. Its function is as follows. Associates with the EF-Tu.GDP complex and induces the exchange of GDP to GTP. It remains bound to the aminoacyl-tRNA.EF-Tu.GTP complex up to the GTP hydrolysis stage on the ribosome. This is Elongation factor Ts from Renibacterium salmoninarum (strain ATCC 33209 / DSM 20767 / JCM 11484 / NBRC 15589 / NCIMB 2235).